A 326-amino-acid polypeptide reads, in one-letter code: Membrane-associated kinase regulator 5 (326 aa).

Disordered regions lie at residues Thr-188 to Pro-239 and Gly-267 to Asp-326. 2 stretches are compositionally biased toward low complexity: residues Lys-190 to Ser-202 and Glu-270 to Ser-305.

Expressed in roots.

It is found in the cell membrane. The protein resides in the cytoplasm. It localises to the cytosol. Positive effector of CLE45 peptide signaling. Post-transcriptionally regulated amplifier of the CLE45 peptide signal that acts downstream of BAM3 in the regulation of the transition of root protophloem cells from proliferation to differentiation; thus preventing primary root elongation but stimulating lateral roots development. This Arabidopsis thaliana (Mouse-ear cress) protein is Membrane-associated kinase regulator 5.